Consider the following 388-residue polypeptide: Succinate--CoA ligase [ADP-forming] subunit beta (388 aa).

The ATP-grasp domain maps to K9–H244. Residues K46, G53–G55, E99, T102, and E107 each bind ATP. Positions 199 and 213 each coordinate Mg(2+). Substrate is bound by residues N264 and G321–V323.

It belongs to the succinate/malate CoA ligase beta subunit family. As to quaternary structure, heterotetramer of two alpha and two beta subunits. The cofactor is Mg(2+).

It carries out the reaction succinate + ATP + CoA = succinyl-CoA + ADP + phosphate. The catalysed reaction is GTP + succinate + CoA = succinyl-CoA + GDP + phosphate. Its pathway is carbohydrate metabolism; tricarboxylic acid cycle; succinate from succinyl-CoA (ligase route): step 1/1. Succinyl-CoA synthetase functions in the citric acid cycle (TCA), coupling the hydrolysis of succinyl-CoA to the synthesis of either ATP or GTP and thus represents the only step of substrate-level phosphorylation in the TCA. The beta subunit provides nucleotide specificity of the enzyme and binds the substrate succinate, while the binding sites for coenzyme A and phosphate are found in the alpha subunit. In Edwardsiella ictaluri (strain 93-146), this protein is Succinate--CoA ligase [ADP-forming] subunit beta.